The primary structure comprises 500 residues: Cytochrome P450 6B4 (500 aa).

Heme is bound at residue cysteine 443.

The protein belongs to the cytochrome P450 family. Heme serves as cofactor.

Its subcellular location is the endoplasmic reticulum membrane. The protein resides in the microsome membrane. The enzyme catalyses an organic molecule + reduced [NADPH--hemoprotein reductase] + O2 = an alcohol + oxidized [NADPH--hemoprotein reductase] + H2O + H(+). Its function is as follows. Enables the insect to feed on furanocoumarin-producing plants and evolved as an adaptation for detoxification of xanthotoxin and other furanocoumarins. This isozyme metabolizes isopimpinellin, imperatorin, and bergapten at high rates, xanthotoxin and psoralen at intermediate rates and angelicin, sphondin, and trioxsalen only at very low rates. This chain is Cytochrome P450 6B4 (CYP6B4), found in Papilio glaucus (Eastern tiger swallowtail butterfly).